The following is a 357-amino-acid chain: Peptide chain release factor 1 (357 aa).

Gln-233 carries the post-translational modification N5-methylglutamine.

It belongs to the prokaryotic/mitochondrial release factor family. Post-translationally, methylated by PrmC. Methylation increases the termination efficiency of RF1.

It is found in the cytoplasm. In terms of biological role, peptide chain release factor 1 directs the termination of translation in response to the peptide chain termination codons UAG and UAA. In Enterococcus faecalis (strain ATCC 700802 / V583), this protein is Peptide chain release factor 1.